The primary structure comprises 453 residues: Histidine--tRNA ligase (453 aa).

It belongs to the class-II aminoacyl-tRNA synthetase family. Homodimer.

The protein localises to the cytoplasm. The enzyme catalyses tRNA(His) + L-histidine + ATP = L-histidyl-tRNA(His) + AMP + diphosphate + H(+). In Cytophaga hutchinsonii (strain ATCC 33406 / DSM 1761 / CIP 103989 / NBRC 15051 / NCIMB 9469 / D465), this protein is Histidine--tRNA ligase.